Reading from the N-terminus, the 195-residue chain is Probable serine/threonine-protein kinase BUD32 homolog (195 aa).

Residues 1–195 (MKVYLGGEAE…GRYVERVSMG (195 aa)) enclose the Protein kinase domain. Position 12 (K12) interacts with ATP. D107 (proton acceptor) is an active-site residue.

The protein belongs to the protein kinase superfamily. Tyr protein kinase family. BUD32 subfamily.

It is found in the cytoplasm. It carries out the reaction L-seryl-[protein] + ATP = O-phospho-L-seryl-[protein] + ADP + H(+). The catalysed reaction is L-threonyl-[protein] + ATP = O-phospho-L-threonyl-[protein] + ADP + H(+). Its function is as follows. Could be involved in the formation of a threonylcarbamoyl group on adenosine at position 37 (t(6)A37) in tRNAs that read codons beginning with adenine. This Archaeoglobus fulgidus (strain ATCC 49558 / DSM 4304 / JCM 9628 / NBRC 100126 / VC-16) protein is Probable serine/threonine-protein kinase BUD32 homolog.